Consider the following 52-residue polypeptide: Large ribosomal subunit protein bL32c (52 aa).

The protein belongs to the bacterial ribosomal protein bL32 family.

Its subcellular location is the plastid. It localises to the chloroplast. In Morus indica (Mulberry), this protein is Large ribosomal subunit protein bL32c.